The primary structure comprises 305 residues: Heme A synthase (305 aa).

Residues 1–6 lie on the Cytoplasmic side of the membrane; the sequence is MKKFLK. The helical transmembrane segment at 7 to 27 threads the bilayer; the sequence is VWSVLTIICMTVVVFGGALVT. Residues 28–63 are Extracellular-facing; the sequence is KTGSADGCGNSWPLCNGQLVRLTDVTPEKLIEFMHR. Cys35 and Cys42 are oxidised to a cystine. The active site involves Glu59. His62 is a heme o binding site. The helical transmembrane segment at 64–84 threads the bilayer; that stretch reads MTTGISSIFVIVLAICAWIYM. Over 85 to 92 the chain is Cytoplasmic; that stretch reads KNRRETKP. The helical transmembrane segment at 93–113 threads the bilayer; sequence LAIIAVLFLIIQALMGMAAVV. Residues 114–122 lie on the Extracellular side of the membrane; it reads WGQNPYIMA. Residues 123–143 form a helical membrane-spanning segment; it reads LHFGISIICYASIVLLALMIF. His124 contacts heme o. Residues 144 to 160 lie on the Cytoplasmic side of the membrane; that stretch reads EVDRKFDARNLVMGTKL. The helical transmembrane segment at 161–181 threads the bilayer; the sequence is RINIYALTIYTYLAVYTGALV. Residues 182–212 are Extracellular-facing; the sequence is RHEKASMAVPVWPFENGHFIMPTSVQDYVQY. Residues 213-233 form a helical membrane-spanning segment; that stretch reads FHRLAAFILIVWLLYVTWLVF. His214 contributes to the heme b binding site. Residues 234–240 lie on the Cytoplasmic side of the membrane; it reads RDYRRYR. A helical membrane pass occupies residues 241-261; the sequence is VLTFSMVLSLVFIALQAVTGA. The Extracellular portion of the chain corresponds to 262-271; sequence LSVYTGVNLY. A helical transmembrane segment spans residues 272–292; it reads IALAHSLIITMLFALLCYLCL. His276 serves as a coordination point for heme b. The Cytoplasmic portion of the chain corresponds to 293–305; sequence LASRSKSNRLRIK.

Belongs to the COX15/CtaA family. Type 1 subfamily. Interacts with CtaB. Heme b serves as cofactor.

The protein localises to the cell membrane. The enzyme catalyses Fe(II)-heme o + 2 A + H2O = Fe(II)-heme a + 2 AH2. Its pathway is porphyrin-containing compound metabolism; heme A biosynthesis; heme A from heme O: step 1/1. Functionally, catalyzes the conversion of heme O to heme A by two successive hydroxylations of the methyl group at C8. The first hydroxylation forms heme I, the second hydroxylation results in an unstable dihydroxymethyl group, which spontaneously dehydrates, resulting in the formyl group of heme A. The polypeptide is Heme A synthase (Listeria monocytogenes serotype 4b (strain F2365)).